A 50-amino-acid polypeptide reads, in one-letter code: Thrombin-like enzyme BpirSP41 (50 aa).

Positions 1–50 constitute a Peptidase S1 domain; that stretch reads VVGGDECDINEHPFLAFLYSHGYFCGLTLINQEWVLTAAHCDRRFMRIYL. Residues Cys-25 and Cys-41 are joined by a disulfide bond. The Charge relay system role is filled by His-40.

This sequence belongs to the peptidase S1 family. Snake venom subfamily. Monomer. Post-translationally, N-glycosylated. Expressed by the venom gland.

It is found in the secreted. Inhibited by serine protease inhibitors PMSF, benzamidine, leupeptin and aprotinin, as well as by copper ions (Cu2+). Not inhibited by metalloprotease inhibitors EDTA, EGTA and 1,10-phenanthroline, as well as by barium (Ba2+) and calcium ion (Ca2+). Snake venom serine protease that interferes with the hemostatic system of the prey. It almost completely degrades both Aalpha (FGA) and Bbeta (FGB) chains of fibrinogen. It presents a higher ability to degrade fibrin clots than BpirSP27. It hydrolyzes chromogenic substrates S-2238 (used for testing thrombin activity), S-2222 (factor Xa), S-2266 (glandular kallikrein and factor XIa), and S-2302 (plasma kallikrein, factor XIa and XIIa). It shows a decrease in the clotting time of human plasma in the presence of increasing doses of the enzyme. Its minimum coagulant dose (MCD) is 20 ug. It promotes platelet aggregation with a maximum of aggregation of 20%, regardless of the concentration increase or the presence of calcium. It also shows 40% inhibition of the hemolytic activity promoted by the complement pathways and possess only a minor role in the induction of edema and pain in rat. This is Thrombin-like enzyme BpirSP41 from Bothrops pirajai (Piraja's lancehead).